We begin with the raw amino-acid sequence, 97 residues long: Large ribosomal subunit protein bL28 (97 aa).

The protein belongs to the bacterial ribosomal protein bL28 family.

This Rickettsia rickettsii (strain Iowa) protein is Large ribosomal subunit protein bL28.